Consider the following 102-residue polypeptide: Small ribosomal subunit protein bS6 (102 aa).

It belongs to the bacterial ribosomal protein bS6 family.

Binds together with bS18 to 16S ribosomal RNA. This chain is Small ribosomal subunit protein bS6, found in Solidesulfovibrio magneticus (strain ATCC 700980 / DSM 13731 / RS-1) (Desulfovibrio magneticus).